Here is a 288-residue protein sequence, read N- to C-terminus: ATP synthase gamma chain (288 aa).

The protein belongs to the ATPase gamma chain family. As to quaternary structure, F-type ATPases have 2 components, CF(1) - the catalytic core - and CF(0) - the membrane proton channel. CF(1) has five subunits: alpha(3), beta(3), gamma(1), delta(1), epsilon(1). CF(0) has three main subunits: a, b and c.

The protein resides in the cell inner membrane. Produces ATP from ADP in the presence of a proton gradient across the membrane. The gamma chain is believed to be important in regulating ATPase activity and the flow of protons through the CF(0) complex. In Rickettsia bellii (strain OSU 85-389), this protein is ATP synthase gamma chain.